The following is a 425-amino-acid chain: Histidine--tRNA ligase 2 (425 aa).

The protein belongs to the class-II aminoacyl-tRNA synthetase family. Homodimer.

It localises to the cytoplasm. It carries out the reaction tRNA(His) + L-histidine + ATP = L-histidyl-tRNA(His) + AMP + diphosphate + H(+). The polypeptide is Histidine--tRNA ligase 2 (Shouchella clausii (strain KSM-K16) (Alkalihalobacillus clausii)).